The primary structure comprises 349 residues: MSLLLPKLALTLGDPAGIGPEIVLKALADPQVQACAQITVVGERQVLEATYCLLRQRGATDLADPAGIPVLEGGSGFYLEPSRVGRGDVASGAASFAYLKTAIEEALRGQFQGIVTAPIAKYLWHQAGYPFPGQTEVLAQLSGSERYGMLFVARSPHSGWQIRVLLATTHIPLSQVPLTLTPELVRAKLDLLVGSLRKLFGIVNPVIAVAGLNPHAGEQGQLGQEEKTWLAELLRTYPHAKIWGPLPPDTMWLAPAQAWYGQGAPAVADAYLALYHDQGLIPVKLLAFDRAVNLTLGLPFIRTSPDHGTAFDLAGQGVARAESLKQAILLAAELALSSAAASRSLQAQR.

Thr135 is a substrate binding site. Residues His170, His215, and His276 each coordinate a divalent metal cation. Substrate-binding residues include Lys284, Asn293, and Arg302.

The protein belongs to the PdxA family. As to quaternary structure, homodimer. Requires a divalent metal cation as cofactor.

Its subcellular location is the cytoplasm. It catalyses the reaction 4-(phosphooxy)-L-threonine + NAD(+) = 3-amino-2-oxopropyl phosphate + CO2 + NADH. It functions in the pathway cofactor biosynthesis; pyridoxine 5'-phosphate biosynthesis; pyridoxine 5'-phosphate from D-erythrose 4-phosphate: step 4/5. Its function is as follows. Catalyzes the NAD(P)-dependent oxidation of 4-(phosphooxy)-L-threonine (HTP) into 2-amino-3-oxo-4-(phosphooxy)butyric acid which spontaneously decarboxylates to form 3-amino-2-oxopropyl phosphate (AHAP). The protein is 4-hydroxythreonine-4-phosphate dehydrogenase of Synechococcus sp. (strain JA-3-3Ab) (Cyanobacteria bacterium Yellowstone A-Prime).